Consider the following 118-residue polypeptide: Large ribosomal subunit protein bL20 (118 aa).

This sequence belongs to the bacterial ribosomal protein bL20 family.

Functionally, binds directly to 23S ribosomal RNA and is necessary for the in vitro assembly process of the 50S ribosomal subunit. It is not involved in the protein synthesizing functions of that subunit. This is Large ribosomal subunit protein bL20 from Cupriavidus metallidurans (strain ATCC 43123 / DSM 2839 / NBRC 102507 / CH34) (Ralstonia metallidurans).